A 147-amino-acid polypeptide reads, in one-letter code: MVHLTPEEKNAVTALWGKVNVDEVGGEALGRLLVVYPWTQRFFDSFGDLSSPAAVMGNPKVKAHGKKVLGAFSDGLNHLDNLKGTFAQLSELHCDKLHVDPENFKLLGNVLVCVLAHHFGKEFTPQVQAAYQKVVAGVANALAHKYH.

N-acetylvaline is present on Val2. The Globin domain maps to 3-147 (HLTPEEKNAV…VANALAHKYH (145 aa)). Position 13 is a phosphothreonine (Thr13). The residue at position 45 (Ser45) is a Phosphoserine. Lys60 is subject to N6-acetyllysine. Residue His64 coordinates heme b. Lys83 is modified (N6-acetyllysine). His93 is a heme b binding site. Cys94 carries the S-nitrosocysteine modification. At Lys145 the chain carries N6-acetyllysine.

It belongs to the globin family. As to quaternary structure, heterotetramer of two alpha chains and two beta chains. In terms of tissue distribution, red blood cells.

In terms of biological role, involved in oxygen transport from the lung to the various peripheral tissues. This Papio anubis (Olive baboon) protein is Hemoglobin subunit beta (HBB).